The chain runs to 259 residues: Virulence plasmid ParA family protein pGP5-D (259 aa).

Phe9 to Thr16 serves as a coordination point for ATP.

This sequence belongs to the ParA family.

The sequence is that of Virulence plasmid ParA family protein pGP5-D from Chlamydia psittaci (Chlamydophila psittaci).